The chain runs to 438 residues: Putative phospholipase A2 (438 aa).

Catalysis depends on S257, which acts as the Nucleophile. Active-site charge relay system residues include D291 and H368.

The protein belongs to the serine esterase family.

The protein localises to the cytoplasm. It is found in the nucleus. It catalyses the reaction a 1-O-alkyl-2-acetyl-sn-glycero-3-phosphocholine + H2O = a 1-O-alkyl-sn-glycero-3-phosphocholine + acetate + H(+). The polypeptide is Putative phospholipase A2 (Schizosaccharomyces pombe (strain 972 / ATCC 24843) (Fission yeast)).